The primary structure comprises 246 residues: Carbonic anhydrase (246 aa).

An N-terminal signal peptide occupies residues 1–22 (MKTSLGKAALLALSMMPVTVFA). The 224-residue stretch at 23–246 (SHWSYEGEGS…QPLNGRVVIE (224 aa)) folds into the Alpha-carbonic anhydrase domain. A disulfide bridge links C46 with C201. Residue H84 is the Proton acceptor of the active site. Positions 111, 113, and 130 each coordinate Zn(2+). A substrate-binding site is contributed by 197 to 198 (TT).

The protein belongs to the alpha-carbonic anhydrase family. Zn(2+) is required as a cofactor.

The protein resides in the periplasm. The enzyme catalyses hydrogencarbonate + H(+) = CO2 + H2O. In terms of biological role, reversible hydration of carbon dioxide. This is Carbonic anhydrase (cah) from Klebsiella pneumoniae.